We begin with the raw amino-acid sequence, 153 residues long: Probable Brix domain-containing ribosomal biogenesis protein (153 aa).

The 153-residue stretch at 1 to 153 (MQVLTTSRKP…RILKISRSSR (153 aa)) folds into the Brix domain.

In terms of biological role, probably involved in the biogenesis of the ribosome. The polypeptide is Probable Brix domain-containing ribosomal biogenesis protein (Archaeoglobus fulgidus (strain ATCC 49558 / DSM 4304 / JCM 9628 / NBRC 100126 / VC-16)).